The following is a 450-amino-acid chain: MFS-type transporter avaK (450 aa).

8 helical membrane passes run 18–38 (VMAL…LSMP), 100–120 (RVVC…SGLL), 148–168 (AVAL…AAPA), 171–191 (ALVA…MLFV), 244–264 (APII…HFLL), 280–300 (LVLV…MPAA), 329–349 (FGFF…ALAF), and 408–428 (GWLG…LVAV).

This sequence belongs to the major facilitator superfamily.

Its subcellular location is the membrane. The protein operates within secondary metabolite biosynthesis. Functionally, MFS-type transporter; part of the cluster that mediates the biosynthesis of a highly modified cyclo-arginine-tryptophan dipeptide (cRW). This chain is MFS-type transporter avaK, found in Aspergillus versicolor.